A 352-amino-acid chain; its full sequence is Methylthioribose-1-phosphate isomerase (352 aa).

Residues 49 to 51, Arg-93, and Gln-202 contribute to the substrate site; that span reads RGA. Asp-243 (proton donor) is an active-site residue. 253–254 is a binding site for substrate; the sequence is NK.

Belongs to the eIF-2B alpha/beta/delta subunits family. MtnA subfamily.

It carries out the reaction 5-(methylsulfanyl)-alpha-D-ribose 1-phosphate = 5-(methylsulfanyl)-D-ribulose 1-phosphate. The protein operates within amino-acid biosynthesis; L-methionine biosynthesis via salvage pathway; L-methionine from S-methyl-5-thio-alpha-D-ribose 1-phosphate: step 1/6. In terms of biological role, catalyzes the interconversion of methylthioribose-1-phosphate (MTR-1-P) into methylthioribulose-1-phosphate (MTRu-1-P). The sequence is that of Methylthioribose-1-phosphate isomerase from Magnetococcus marinus (strain ATCC BAA-1437 / JCM 17883 / MC-1).